A 158-amino-acid polypeptide reads, in one-letter code: METIYDFVVETNKGVTYKLDAYKGDVMLIVNTASECGFTSQFEGLQSLYEKYKDQGFVILGFPCNQFGGQEPGSGEEAAQNCKLNYGVTFPMHQKIDVKGEHQLPLFRYLTAAQHGFFNEKIKWNFTKFLVDREGNVVKRFAPQKKPVQIEREIEKLL.

Residue C36 is part of the active site.

The protein belongs to the glutathione peroxidase family.

This Staphylococcus aureus (strain COL) protein is Glutathione peroxidase homolog BsaA (bsaA).